Reading from the N-terminus, the 130-residue chain is Small ribosomal subunit protein uS8 (130 aa).

It belongs to the universal ribosomal protein uS8 family. As to quaternary structure, part of the 30S ribosomal subunit. Contacts proteins S5 and S12.

One of the primary rRNA binding proteins, it binds directly to 16S rRNA central domain where it helps coordinate assembly of the platform of the 30S subunit. This is Small ribosomal subunit protein uS8 from Onion yellows phytoplasma (strain OY-M).